Consider the following 251-residue polypeptide: uncharacterized protein (251 aa).

Positions 1 to 18 are cleaved as a signal peptide; that stretch reads MRILIILSIILCSLSIRA.

The protein belongs to the MlaA family.

This is an uncharacterized protein from Rickettsia conorii (strain ATCC VR-613 / Malish 7).